The primary structure comprises 456 residues: Arginine biosynthesis bifunctional protein ArgJ, mitochondrial (456 aa).

Thr-184, Lys-213, Thr-224, Glu-311, Asn-451, and Thr-456 together coordinate substrate. The active-site Nucleophile is the Thr-224.

Belongs to the ArgJ family. As to quaternary structure, heterodimer of an alpha and a beta chain. The alpha and beta chains are autoproteolytically processed from a single precursor protein within the mitochondrion.

The protein localises to the mitochondrion matrix. The enzyme catalyses N(2)-acetyl-L-ornithine + L-glutamate = N-acetyl-L-glutamate + L-ornithine. It catalyses the reaction L-glutamate + acetyl-CoA = N-acetyl-L-glutamate + CoA + H(+). The protein operates within amino-acid biosynthesis; L-arginine biosynthesis; L-ornithine and N-acetyl-L-glutamate from L-glutamate and N(2)-acetyl-L-ornithine (cyclic): step 1/1. It functions in the pathway amino-acid biosynthesis; L-arginine biosynthesis; N(2)-acetyl-L-ornithine from L-glutamate: step 1/4. Functionally, catalyzes two activities which are involved in the cyclic version of arginine biosynthesis: the synthesis of acetylglutamate from glutamate and acetyl-CoA, and of ornithine by transacetylation between acetylornithine and glutamate. This is Arginine biosynthesis bifunctional protein ArgJ, mitochondrial from Neosartorya fischeri (strain ATCC 1020 / DSM 3700 / CBS 544.65 / FGSC A1164 / JCM 1740 / NRRL 181 / WB 181) (Aspergillus fischerianus).